Here is a 131-residue protein sequence, read N- to C-terminus: Profilin-9 (131 aa).

Cysteines 13 and 115 form a disulfide. The Involved in PIP2 interaction motif lies at 81–97 (AVIRGKKGSGGITVKKT). Residue threonine 111 is modified to Phosphothreonine.

It belongs to the profilin family. Occurs in many kinds of cells as a complex with monomeric actin in a 1:1 ratio. In terms of processing, phosphorylated by MAP kinases.

The protein resides in the cytoplasm. It localises to the cytoskeleton. Functionally, binds to actin and affects the structure of the cytoskeleton. At high concentrations, profilin prevents the polymerization of actin, whereas it enhances it at low concentrations. This is Profilin-9 from Zea mays (Maize).